Here is a 320-residue protein sequence, read N- to C-terminus: Fe-S cluster assembly protein dre2 (320 aa).

An N-terminal SAM-like domain region spans residues methionine 1 to valine 130. The interval proline 131–serine 213 is linker. Positions leucine 141–alanine 166 are disordered. The [2Fe-2S] cluster site is built by cysteine 222, cysteine 233, cysteine 236, and cysteine 238. The fe-S binding site A stretch occupies residues cysteine 222–cysteine 238. Residues cysteine 283, cysteine 286, cysteine 294, and cysteine 297 each coordinate [4Fe-4S] cluster. Short sequence motifs (cx2C motif) lie at residues cysteine 283–cysteine 286 and cysteine 294–cysteine 297. A fe-S binding site B region spans residues cysteine 283–cysteine 297.

This sequence belongs to the anamorsin family. As to quaternary structure, monomer. Interacts with tah18. Interacts with mia40. The cofactor is [2Fe-2S] cluster. It depends on [4Fe-4S] cluster as a cofactor.

It is found in the cytoplasm. The protein resides in the mitochondrion intermembrane space. Its function is as follows. Component of the cytosolic iron-sulfur (Fe-S) protein assembly (CIA) machinery required for the maturation of extramitochondrial Fe-S proteins. Part of an electron transfer chain functioning in an early step of cytosolic Fe-S biogenesis, facilitating the de novo assembly of a [4Fe-4S] cluster on the scaffold complex cfd1-nbp35. Electrons are transferred to dre2 from NADPH via the FAD- and FMN-containing protein tah18. Tah18-dre2 are also required for the assembly of the diferric tyrosyl radical cofactor of ribonucleotide reductase (RNR), probably by providing electrons for reduction during radical cofactor maturation in the catalytic small subunit rnr2. This is Fe-S cluster assembly protein dre2 from Neosartorya fischeri (strain ATCC 1020 / DSM 3700 / CBS 544.65 / FGSC A1164 / JCM 1740 / NRRL 181 / WB 181) (Aspergillus fischerianus).